Here is a 477-residue protein sequence, read N- to C-terminus: Proline--tRNA ligase (477 aa).

Belongs to the class-II aminoacyl-tRNA synthetase family. ProS type 3 subfamily. As to quaternary structure, homodimer.

Its subcellular location is the cytoplasm. It carries out the reaction tRNA(Pro) + L-proline + ATP = L-prolyl-tRNA(Pro) + AMP + diphosphate. In terms of biological role, catalyzes the attachment of proline to tRNA(Pro) in a two-step reaction: proline is first activated by ATP to form Pro-AMP and then transferred to the acceptor end of tRNA(Pro). The sequence is that of Proline--tRNA ligase from Methanoculleus marisnigri (strain ATCC 35101 / DSM 1498 / JR1).